Here is a 128-residue protein sequence, read N- to C-terminus: Large ribosomal subunit protein eL22 (128 aa).

The protein belongs to the eukaryotic ribosomal protein eL22 family. As to quaternary structure, component of the large ribosomal subunit.

It is found in the cytoplasm. Its function is as follows. Component of the large ribosomal subunit. The ribosome is a large ribonucleoprotein complex responsible for the synthesis of proteins in the cell. This is Large ribosomal subunit protein eL22 (rpl22) from Xenopus tropicalis (Western clawed frog).